Here is a 244-residue protein sequence, read N- to C-terminus: MSINQYSSDFHYHSLMWQQQQQQQQHQNDVVEEKEALFEKPLTPSDVGKLNRLVIPKQHAERYFPLAAAAADAVEKGLLLCFEDEEGKPWRFRYSYWNSSQSYVLTKGWSRYVKEKHLDAGDVVLFHRHRSDGGRFFIGWRRRGDSSSSSDSYRHVQSNASLQYYPHAGAQAVESQRGNSKTLRLFGVNMECQLDSDWSEPSTPDGSNTYTTNHDQFHFYPQQQHYPPPYYMDISFTGDMNRTS.

The TF-B3 DNA-binding region spans 38-144 (FEKPLTPSDV…RFFIGWRRRG (107 aa)).

The protein localises to the nucleus. The sequence is that of B3 domain-containing protein At2g36080 (ARF31) from Arabidopsis thaliana (Mouse-ear cress).